Here is a 358-residue protein sequence, read N- to C-terminus: Histidinol-phosphate aminotransferase (358 aa).

Position 221 is an N6-(pyridoxal phosphate)lysine (lysine 221).

The protein belongs to the class-II pyridoxal-phosphate-dependent aminotransferase family. Histidinol-phosphate aminotransferase subfamily. As to quaternary structure, homodimer. Requires pyridoxal 5'-phosphate as cofactor.

The enzyme catalyses L-histidinol phosphate + 2-oxoglutarate = 3-(imidazol-4-yl)-2-oxopropyl phosphate + L-glutamate. Its pathway is amino-acid biosynthesis; L-histidine biosynthesis; L-histidine from 5-phospho-alpha-D-ribose 1-diphosphate: step 7/9. This Caldicellulosiruptor saccharolyticus (strain ATCC 43494 / DSM 8903 / Tp8T 6331) protein is Histidinol-phosphate aminotransferase.